A 323-amino-acid polypeptide reads, in one-letter code: Olfactory receptor 51S1 (323 aa).

Topologically, residues 1-33 (MSTLPTQIAPNSSTSMAPTFLLVGMPGLSGAPS) are extracellular. N11 carries an N-linked (GlcNAc...) asparagine glycan. Residues 34 to 54 (WWTLPLIAVYLLSALGNGTIL) traverse the membrane as a helical segment. Over 55-62 (WIIALQPA) the chain is Cytoplasmic. The helical transmembrane segment at 63–83 (LHRPMHFFLFLLSVSDIGLVT) threads the bilayer. The Extracellular segment spans residues 84–107 (ALMPTLLGIALAGAHTVPASACLL). C105 and C197 are disulfide-bonded. Residues 108-128 (QMVFIHVFSVMESSVLLAMSI) traverse the membrane as a helical segment. Topologically, residues 129–147 (DRALAICRPLHYPALLTNG) are cytoplasmic. The helical transmembrane segment at 148–168 (VISKISLAISFRCLGLHLPLP) threads the bilayer. At 169 to 203 (FLLAYMPYCLPQVLTHSYCLHPDVARLACPEAWGA) the chain is on the extracellular side. The chain crosses the membrane as a helical span at residues 204–224 (AYSLFVVLSAMGLDPLLIFFS). At 225–244 (YGLIGKVLQGVESREDRWKA) the chain is on the cytoplasmic side. The chain crosses the membrane as a helical span at residues 245–265 (GQTCAAHLSAVLLFYIPMILL). Residues 266–280 (ALINHPELPITQHTH) are Extracellular-facing. Residues 281 to 301 (TLLSYVHFLLPPLINPILYSV) form a helical membrane-spanning segment. Over 302–323 (KMKEIRKRILNRLQPRKVGGAQ) the chain is Cytoplasmic.

The protein belongs to the G-protein coupled receptor 1 family.

The protein resides in the cell membrane. In terms of biological role, odorant receptor. The protein is Olfactory receptor 51S1 (OR51S1) of Homo sapiens (Human).